Here is a 1080-residue protein sequence, read N- to C-terminus: Origin recognition complex subunit 3 (1080 aa).

Disordered stretches follow at residues 92 to 112, 566 to 701, and 869 to 902; these read YGIS…DDSS, TIKL…PKRI, and IKNE…ENEQ. Positions 651-661 are enriched in basic and acidic residues; sequence IKSDLECNDND. Acidic residues predominate over residues 662–671; it reads KDNDDNDNDI. Low complexity-rich tracts occupy residues 672-688 and 875-896; these read NENN…NSNN and QQQQ…QQQQ.

This sequence belongs to the ORC3 family. ORC is composed of six subunits.

It is found in the nucleus. Component of the origin recognition complex (ORC) that binds origins of replication. DNA-binding is ATP-dependent, however specific DNA sequences that define origins of replication have not been identified so far. ORC is required to assemble the pre-replication complex necessary to initiate DNA replication. This chain is Origin recognition complex subunit 3 (orcC), found in Dictyostelium discoideum (Social amoeba).